A 959-amino-acid polypeptide reads, in one-letter code: Isoleucine--tRNA ligase (959 aa).

Positions 66-76 (PYANGDLHIGH) match the 'HIGH' region motif. Glutamate 592 contributes to the L-isoleucyl-5'-AMP binding site. The short motif at 633–637 (KMSKS) is the 'KMSKS' region element. Lysine 636 provides a ligand contact to ATP. Cysteine 922, cysteine 925, cysteine 942, and cysteine 945 together coordinate Zn(2+).

Belongs to the class-I aminoacyl-tRNA synthetase family. IleS type 1 subfamily. In terms of assembly, monomer. Zn(2+) serves as cofactor.

The protein resides in the cytoplasm. It carries out the reaction tRNA(Ile) + L-isoleucine + ATP = L-isoleucyl-tRNA(Ile) + AMP + diphosphate. Functionally, catalyzes the attachment of isoleucine to tRNA(Ile). As IleRS can inadvertently accommodate and process structurally similar amino acids such as valine, to avoid such errors it has two additional distinct tRNA(Ile)-dependent editing activities. One activity is designated as 'pretransfer' editing and involves the hydrolysis of activated Val-AMP. The other activity is designated 'posttransfer' editing and involves deacylation of mischarged Val-tRNA(Ile). This is Isoleucine--tRNA ligase from Ralstonia pickettii (strain 12J).